The chain runs to 456 residues: Cell cycle checkpoint control protein Rad9 (456 aa).

A Nuclear localization signal motif is present at residues 300 to 302 (KRK).

This sequence belongs to the rad9 family. In terms of assembly, component of the 9-1-1 checkpoint clamp complex consisting of Rad9 isoform A, Rad1 and Hus1-like; the interaction with Hus1-like is direct. Does not interact directly with Rad1; this interaction is probably mediated by Hus1-like. This complex probably also forms with Rad9 isoform B, however 9-1-1 complex containing Rad9 isoform A localizes to the nuclear periphery. Interacts with Brca2. In terms of tissue distribution, expressed in ovary.

The protein resides in the nucleus envelope. It localises to the nucleus. Functionally, component of the Rad9-Rad1-Hus1 (9-1-1) checkpoint clamp complex. In terms of biological role, targets the 9-1-1 complex to the nuclear periphery. Targeting to the nuclear periphery is disrupted in the presence of persistent double stranded break DNA damage, possibly as a function of the meiotic checkpoint. This chain is Cell cycle checkpoint control protein Rad9, found in Drosophila melanogaster (Fruit fly).